A 279-amino-acid chain; its full sequence is F420-dependent methylenetetrahydromethanopterin dehydrogenase (279 aa).

The protein belongs to the MTD family.

The catalysed reaction is 5,10-methylenetetrahydromethanopterin + oxidized coenzyme F420-(gamma-L-Glu)(n) + 2 H(+) = 5,10-methenyl-5,6,7,8-tetrahydromethanopterin + reduced coenzyme F420-(gamma-L-Glu)(n). It participates in one-carbon metabolism; methanogenesis from CO(2); 5,10-methylene-5,6,7,8-tetrahydromethanopterin from 5,10-methenyl-5,6,7,8-tetrahydromethanopterin (coenzyme F420 route): step 1/1. In terms of biological role, catalyzes the reversible reduction of methenyl-H(4)MPT(+) to methylene-H(4)MPT. The chain is F420-dependent methylenetetrahydromethanopterin dehydrogenase (mtd) from Methanosarcina acetivorans (strain ATCC 35395 / DSM 2834 / JCM 12185 / C2A).